A 224-amino-acid polypeptide reads, in one-letter code: uncharacterized protein (224 aa).

To M.tuberculosis Rv2558.

This is an uncharacterized protein from Mycobacterium tuberculosis (strain CDC 1551 / Oshkosh).